The primary structure comprises 250 residues: MSGHSKWATTKHKKAANDAKRGKEFAKLIKNIEVAARTGGGDPSANPTLDDMIKKAKKASVPNDNIERARKRGSGEEAGGADWETVTYEGYGNGGVAILIECLTDNRNRAATDVRTAMNKNGGNMADAGSVAYMFNRKGVVQLPKEGNTEDDILMAVLDAGAEEVNDLGQNFEVVSAAGDLSAVRDALKEAGLEYDSAEPDYRADVKVQLDASGARKIFHLIDALEDSDDVQNVYTNMDLSDEVLAELDN.

The segment at 1-22 (MSGHSKWATTKHKKAANDAKRG) is disordered.

Belongs to the TACO1 family.

It is found in the cytoplasm. The sequence is that of Probable transcriptional regulatory protein ckrop_1032 from Corynebacterium kroppenstedtii (strain DSM 44385 / JCM 11950 / CIP 105744 / CCUG 35717).